Consider the following 245-residue polypeptide: Sugar fermentation stimulation protein homolog (245 aa).

Belongs to the SfsA family.

The protein is Sugar fermentation stimulation protein homolog of Yersinia pestis bv. Antiqua (strain Nepal516).